We begin with the raw amino-acid sequence, 433 residues long: Mg(2+)/citrate complex secondary transporter (433 aa).

Transmembrane regions (helical) follow at residues 2–22 (LAIL…TKRL), 24–44 (VLTA…FGFT), 60–80 (TAVM…TGLF), 98–118 (IVVG…GSTT), 131–151 (LLLG…MGIM), 176–196 (GPMI…AYVL), 247–267 (VSGK…ALIV), 286–306 (VLAI…LTGT), 324–344 (MGGL…FLMP), 345–365 (NDAY…AYGV), 379–399 (PIHM…LVGV), and 411–431 (WAVL…AISI).

Belongs to the CitM (TC 2.A.11) transporter family.

The protein localises to the cell membrane. With respect to regulation, the uptake activity increases with increasing Mg(2+) concentrations. Inhibited by FCCP, TCC and nigericin. In terms of biological role, proton motive force-driven secondary transporter that mediates the transport of citrate complexed to Mg(2+). Cotransports at least two protons per Mg(2+)-citrate complex. Can also transport citrate in complex with Ni(2+), Mn(2+), Co(2+), and Zn(2+). The sequence is that of Mg(2+)/citrate complex secondary transporter (citM) from Bacillus subtilis (strain 168).